We begin with the raw amino-acid sequence, 353 residues long: Photosystem II protein D1 (353 aa).

At Thr2 the chain carries N-acetylthreonine. Thr2 bears the Phosphothreonine mark. Transmembrane regions (helical) follow at residues 29–46 (YIGW…TATS), 118–133 (HFLL…EWEL), and 142–156 (WIAV…AATA). His118 is a chlorophyll a binding site. Tyr126 is a pheophytin a binding site. [CaMn4O5] cluster-binding residues include Asp170 and Glu189. Residues 197–218 (FHMLGVAGVFGGSLFSAMHGSL) traverse the membrane as a helical segment. Position 198 (His198) interacts with chlorophyll a. A quinone contacts are provided by residues His215 and 264-265 (SF). His215 serves as a coordination point for Fe cation. His272 is a binding site for Fe cation. Residues 274 to 288 (FLAAWPVVGIWFTAL) form a helical membrane-spanning segment. Positions 332, 333, 342, and 344 each coordinate [CaMn4O5] cluster. A propeptide spanning residues 345–353 (AVEAPSTNG) is cleaved from the precursor.

This sequence belongs to the reaction center PufL/M/PsbA/D family. As to quaternary structure, PSII is composed of 1 copy each of membrane proteins PsbA, PsbB, PsbC, PsbD, PsbE, PsbF, PsbH, PsbI, PsbJ, PsbK, PsbL, PsbM, PsbT, PsbX, PsbY, PsbZ, Psb30/Ycf12, at least 3 peripheral proteins of the oxygen-evolving complex and a large number of cofactors. It forms dimeric complexes. It depends on The D1/D2 heterodimer binds P680, chlorophylls that are the primary electron donor of PSII, and subsequent electron acceptors. It shares a non-heme iron and each subunit binds pheophytin, quinone, additional chlorophylls, carotenoids and lipids. D1 provides most of the ligands for the Mn4-Ca-O5 cluster of the oxygen-evolving complex (OEC). There is also a Cl(-1) ion associated with D1 and D2, which is required for oxygen evolution. The PSII complex binds additional chlorophylls, carotenoids and specific lipids. as a cofactor. Post-translationally, tyr-161 forms a radical intermediate that is referred to as redox-active TyrZ, YZ or Y-Z. In terms of processing, C-terminally processed by CTPA; processing is essential to allow assembly of the oxygen-evolving complex and thus photosynthetic growth.

The protein resides in the plastid. It is found in the chloroplast thylakoid membrane. The enzyme catalyses 2 a plastoquinone + 4 hnu + 2 H2O = 2 a plastoquinol + O2. In terms of biological role, photosystem II (PSII) is a light-driven water:plastoquinone oxidoreductase that uses light energy to abstract electrons from H(2)O, generating O(2) and a proton gradient subsequently used for ATP formation. It consists of a core antenna complex that captures photons, and an electron transfer chain that converts photonic excitation into a charge separation. The D1/D2 (PsbA/PsbD) reaction center heterodimer binds P680, the primary electron donor of PSII as well as several subsequent electron acceptors. The sequence is that of Photosystem II protein D1 from Nymphaea alba (White water-lily).